We begin with the raw amino-acid sequence, 283 residues long: NAD kinase (283 aa).

Asp65 (proton acceptor) is an active-site residue. NAD(+) contacts are provided by residues 65–66, 139–140, Arg150, Arg167, Asp169, 180–185, and Gln239; these read DG, ND, and TGYSVS.

It belongs to the NAD kinase family. Requires a divalent metal cation as cofactor.

Its subcellular location is the cytoplasm. The catalysed reaction is NAD(+) + ATP = ADP + NADP(+) + H(+). Involved in the regulation of the intracellular balance of NAD and NADP, and is a key enzyme in the biosynthesis of NADP. Catalyzes specifically the phosphorylation on 2'-hydroxyl of the adenosine moiety of NAD to yield NADP. This Nitratidesulfovibrio vulgaris (strain DSM 19637 / Miyazaki F) (Desulfovibrio vulgaris) protein is NAD kinase.